The sequence spans 360 residues: Tryptophan--tRNA ligase, mitochondrial (360 aa).

Residues 1–18 constitute a mitochondrion transit peptide; it reads MALFSVRKARECWRFIRA. ATP contacts are provided by residues glutamine 42 and 48-51; that span reads HLGN. L-tryptophan is bound at residue aspartate 167. ATP-binding positions include 179-181, valine 217, and 226-230; these read GED and KMSKS.

This sequence belongs to the class-I aminoacyl-tRNA synthetase family.

It localises to the mitochondrion matrix. Its subcellular location is the mitochondrion. The catalysed reaction is tRNA(Trp) + L-tryptophan + ATP = L-tryptophyl-tRNA(Trp) + AMP + diphosphate + H(+). Catalyzes the attachment of tryptophan to tRNA(Trp) in a two-step reaction: tryptophan is first activated by ATP to form Trp-AMP and then transferred to the acceptor end of tRNA(Trp). The sequence is that of Tryptophan--tRNA ligase, mitochondrial (Wars2) from Mus musculus (Mouse).